Here is a 436-residue protein sequence, read N- to C-terminus: Cholecystokinin receptor type A (436 aa).

Residues 1-41 (MDVVDSLLMNGSNITPPCELGLENETLFCLDQPQPSKEWQS) are Extracellular-facing. Asn10 and Asn24 each carry an N-linked (GlcNAc...) asparagine glycan. A disulfide bridge links Cys18 with Cys29. Residues 42–67 (AVQILLYSFIFLLSVLGNTLVITVLI) form a helical membrane-spanning segment. Over 68-77 (RNKRMRTVTN) the chain is Cytoplasmic. The helical transmembrane segment at 78–104 (IFLLSLAVSDLMLCLFCMPFNLIPNLL) threads the bilayer. The Extracellular portion of the chain corresponds to 105-115 (KDFIFGSAVCK). Cys114 and Cys196 are joined by a disulfide. The chain crosses the membrane as a helical span at residues 116–137 (TTTYFMGTSVSVSTFNLVAISL). Residues 138-157 (ERYGAICRPLQSRVWQTKSH) are Cytoplasmic-facing. The chain crosses the membrane as a helical span at residues 158 to 178 (ALKVIAATWCLSFTIMTPYPI). The Extracellular portion of the chain corresponds to 179–210 (YSNLVPFTKNNNQTANMCRFLLPSDAMQQSWQ). An N-linked (GlcNAc...) asparagine glycan is attached at Asn190. Residues 211–234 (TFLLLILFLIPGVVMVVAYGLISL) form a helical membrane-spanning segment. The Cytoplasmic segment spans residues 235-321 (ELYQGIKFDA…NLIAKKRVIR (87 aa)). Residues 252-280 (EKRLSSGGGGGGGSSSSRYEDSDGCYLQK) are disordered. The chain crosses the membrane as a helical span at residues 322 to 342 (MLIVIVVLFFLCWMPIFSANA). Residues 343 to 357 (WRAYDTVSAEKHLSG) are Extracellular-facing. The helical transmembrane segment at 358-381 (TPISFILLLSYTSSCVNPIIYCFM) threads the bilayer. Residues 382–436 (NKRFRLGFMATFPCCPNPGPTGVRGEVGEEEDGRTIRASLSRYSYSHMSTSAPPH) are Cytoplasmic-facing. The S-palmitoyl cysteine moiety is linked to residue Cys395.

It belongs to the G-protein coupled receptor 1 family.

The protein localises to the cell membrane. Receptor for cholecystokinin. Mediates pancreatic growth and enzyme secretion, smooth muscle contraction of the gall bladder and stomach. Has a 1000-fold higher affinity for CCK rather than for gastrin. It modulates feeding and dopamine-induced behavior in the central and peripheral nervous system. This receptor mediates its action by association with G proteins that activate a phosphatidylinositol-calcium second messenger system. This Mus musculus (Mouse) protein is Cholecystokinin receptor type A (Cckar).